The chain runs to 300 residues: Bifunctional protein FolD (300 aa).

Residues 169–171 (GRG), serine 196, and isoleucine 237 each bind NADP(+).

It belongs to the tetrahydrofolate dehydrogenase/cyclohydrolase family. Homodimer.

It carries out the reaction (6R)-5,10-methylene-5,6,7,8-tetrahydrofolate + NADP(+) = (6R)-5,10-methenyltetrahydrofolate + NADPH. The enzyme catalyses (6R)-5,10-methenyltetrahydrofolate + H2O = (6R)-10-formyltetrahydrofolate + H(+). The protein operates within one-carbon metabolism; tetrahydrofolate interconversion. Functionally, catalyzes the oxidation of 5,10-methylenetetrahydrofolate to 5,10-methenyltetrahydrofolate and then the hydrolysis of 5,10-methenyltetrahydrofolate to 10-formyltetrahydrofolate. This chain is Bifunctional protein FolD, found in Clavibacter michiganensis subsp. michiganensis (strain NCPPB 382).